A 507-amino-acid chain; its full sequence is ATP synthase subunit alpha, chloroplastic (507 aa).

Position 170–177 (170–177) interacts with ATP; that stretch reads GDRQTGKT. Phosphothreonine is present on threonine 257.

It belongs to the ATPase alpha/beta chains family. F-type ATPases have 2 components, CF(1) - the catalytic core - and CF(0) - the membrane proton channel. CF(1) has five subunits: alpha(3), beta(3), gamma(1), delta(1), epsilon(1). CF(0) has four main subunits: a, b, b' and c.

It is found in the plastid. The protein resides in the chloroplast thylakoid membrane. The enzyme catalyses ATP + H2O + 4 H(+)(in) = ADP + phosphate + 5 H(+)(out). Its function is as follows. Produces ATP from ADP in the presence of a proton gradient across the membrane. The alpha chain is a regulatory subunit. This chain is ATP synthase subunit alpha, chloroplastic, found in Crucihimalaya wallichii (Rock-cress).